The following is a 125-amino-acid chain: Small ribosomal subunit protein uS13 (125 aa).

The interval 90–125 (QRHRKGLPVRGQRTKTNARTRKGPKRTVAGKKKATK) is disordered.

The protein belongs to the universal ribosomal protein uS13 family. In terms of assembly, part of the 30S ribosomal subunit. Forms a loose heterodimer with protein S19. Forms two bridges to the 50S subunit in the 70S ribosome.

Its function is as follows. Located at the top of the head of the 30S subunit, it contacts several helices of the 16S rRNA. In the 70S ribosome it contacts the 23S rRNA (bridge B1a) and protein L5 of the 50S subunit (bridge B1b), connecting the 2 subunits; these bridges are implicated in subunit movement. Contacts the tRNAs in the A and P-sites. The sequence is that of Small ribosomal subunit protein uS13 from Bifidobacterium longum subsp. infantis (strain ATCC 15697 / DSM 20088 / JCM 1222 / NCTC 11817 / S12).